Reading from the N-terminus, the 80-residue chain is RNA-binding protein Hfq (80 aa).

The 61-residue stretch at 9–69 (DVFLNQVRKE…ISTILPITPI (61 aa)) folds into the Sm domain.

This sequence belongs to the Hfq family. As to quaternary structure, homohexamer.

Its function is as follows. RNA chaperone that binds small regulatory RNA (sRNAs) and mRNAs to facilitate mRNA translational regulation in response to envelope stress, environmental stress and changes in metabolite concentrations. Also binds with high specificity to tRNAs. The polypeptide is RNA-binding protein Hfq (Alkaliphilus metalliredigens (strain QYMF)).